A 57-amino-acid polypeptide reads, in one-letter code: DNA-directed RNA polymerase subunit Rpo6 (57 aa).

The protein belongs to the archaeal Rpo6/eukaryotic RPB6 RNA polymerase subunit family. As to quaternary structure, part of the RNA polymerase complex.

Its subcellular location is the cytoplasm. The catalysed reaction is RNA(n) + a ribonucleoside 5'-triphosphate = RNA(n+1) + diphosphate. DNA-dependent RNA polymerase (RNAP) catalyzes the transcription of DNA into RNA using the four ribonucleoside triphosphates as substrates. The chain is DNA-directed RNA polymerase subunit Rpo6 from Pyrococcus furiosus (strain ATCC 43587 / DSM 3638 / JCM 8422 / Vc1).